A 359-amino-acid polypeptide reads, in one-letter code: MHAERRSGPVELLGLDRPRLAAFFDTLGEKRFRARQIMQWLHQRHVYDFDEMTDLSKALRQRLREHARVGLPEVAADQQASDGTRKWVVRLADGNCVEAVYIPEPKRGTLCISSQAGCPMGCTFCATGEGGFSRNLTAAEIVGQVHVARQHLPEGAITNIVFMGMGEPLLNFDPVISASRVFTDDYGFVLSKRRVTISTSGVVHAIERMQRVTDVSLAVSLHAPNNELRNQLVPLNRKNPLERLLPACHAYIAEKPHRRITWEYVMLDGVNDQDEHARELLQRLRGIPSKVNLIPFNPYPGARYGRTPDRQVRRFADRLLEHGLTATIRETRGDDIDGACGQLVGEIRDARASKVARPA.

E98 (proton acceptor) is an active-site residue. Residues 104 to 329 (EPKRGTLCIS…LEHGLTATIR (226 aa)) form the Radical SAM core domain. A disulfide bridge links C111 with C340. C118, C122, and C125 together coordinate [4Fe-4S] cluster. Residues 166-167 (GE), S198, 220-222 (SLH), and N297 each bind S-adenosyl-L-methionine. C340 functions as the S-methylcysteine intermediate in the catalytic mechanism.

Belongs to the radical SAM superfamily. RlmN family. It depends on [4Fe-4S] cluster as a cofactor.

It localises to the cytoplasm. It carries out the reaction adenosine(2503) in 23S rRNA + 2 reduced [2Fe-2S]-[ferredoxin] + 2 S-adenosyl-L-methionine = 2-methyladenosine(2503) in 23S rRNA + 5'-deoxyadenosine + L-methionine + 2 oxidized [2Fe-2S]-[ferredoxin] + S-adenosyl-L-homocysteine. The enzyme catalyses adenosine(37) in tRNA + 2 reduced [2Fe-2S]-[ferredoxin] + 2 S-adenosyl-L-methionine = 2-methyladenosine(37) in tRNA + 5'-deoxyadenosine + L-methionine + 2 oxidized [2Fe-2S]-[ferredoxin] + S-adenosyl-L-homocysteine. Specifically methylates position 2 of adenine 2503 in 23S rRNA and position 2 of adenine 37 in tRNAs. m2A2503 modification seems to play a crucial role in the proofreading step occurring at the peptidyl transferase center and thus would serve to optimize ribosomal fidelity. The sequence is that of Dual-specificity RNA methyltransferase RlmN from Halorhodospira halophila (strain DSM 244 / SL1) (Ectothiorhodospira halophila (strain DSM 244 / SL1)).